We begin with the raw amino-acid sequence, 641 residues long: 1-phosphatidylinositol 4,5-bisphosphate phosphodiesterase zeta-1 (641 aa).

In terms of domain architecture, EF-hand spans 35–70; sequence CSYIHVKRIFKDNDRLKQGRITIEEFRAIYRILTHR. Positions 155 to 299 constitute a PI-PLC X-box domain; sequence QDMTHPLNDY…LKFKVLVKNK (145 aa). Catalysis depends on residues H170 and H215. A PI-PLC Y-box domain is found at 382-498; that stretch reads LSDLVIYTKA…GYILKPHFLR (117 aa). The region spanning 498–622 is the C2 domain; it reads RESESYFNPS…KGYRRVPLFS (125 aa).

As to quaternary structure, interacts via its C2 domain with PtdIns(3)P and, to a lesser extent, PtdIns(5)P in vitro. It depends on Ca(2+) as a cofactor.

The protein localises to the nucleus. It is found in the cytoplasm. The protein resides in the perinuclear region. It carries out the reaction a 1,2-diacyl-sn-glycero-3-phospho-(1D-myo-inositol-4,5-bisphosphate) + H2O = 1D-myo-inositol 1,4,5-trisphosphate + a 1,2-diacyl-sn-glycerol + H(+). Functionally, the production of the second messenger molecules diacylglycerol (DAG) and inositol 1,4,5-trisphosphate (IP3) is mediated by activated phosphatidylinositol-specific phospholipase C enzymes. In vitro, hydrolyzes PtdIns(4,5)P2 in a Ca(2+)-dependent manner. Triggers intracellular Ca(2+) oscillations in oocytes solely during M phase and is involved in inducing oocyte activation and initiating embryonic development up to the blastocyst stage. Is therefore a strong candidate for the egg-activating soluble sperm factor that is transferred from the sperm into the egg cytoplasm following gamete membrane fusion. May exert an inhibitory effect on phospholipase-C-coupled processes that depend on calcium ions and protein kinase C, including CFTR trafficking and function. This is 1-phosphatidylinositol 4,5-bisphosphate phosphodiesterase zeta-1 from Macaca fascicularis (Crab-eating macaque).